The chain runs to 103 residues: Pyrimidine/purine nucleoside phosphorylase (103 aa).

Belongs to the nucleoside phosphorylase PpnP family.

It catalyses the reaction a purine D-ribonucleoside + phosphate = a purine nucleobase + alpha-D-ribose 1-phosphate. It carries out the reaction adenosine + phosphate = alpha-D-ribose 1-phosphate + adenine. The enzyme catalyses cytidine + phosphate = cytosine + alpha-D-ribose 1-phosphate. The catalysed reaction is guanosine + phosphate = alpha-D-ribose 1-phosphate + guanine. It catalyses the reaction inosine + phosphate = alpha-D-ribose 1-phosphate + hypoxanthine. It carries out the reaction thymidine + phosphate = 2-deoxy-alpha-D-ribose 1-phosphate + thymine. The enzyme catalyses uridine + phosphate = alpha-D-ribose 1-phosphate + uracil. The catalysed reaction is xanthosine + phosphate = alpha-D-ribose 1-phosphate + xanthine. In terms of biological role, catalyzes the phosphorolysis of diverse nucleosides, yielding D-ribose 1-phosphate and the respective free bases. Can use uridine, adenosine, guanosine, cytidine, thymidine, inosine and xanthosine as substrates. Also catalyzes the reverse reactions. The polypeptide is Pyrimidine/purine nucleoside phosphorylase (Shewanella frigidimarina (strain NCIMB 400)).